A 93-amino-acid polypeptide reads, in one-letter code: RNA silencing suppressor (93 aa).

Residues Cys-44–Arg-47 form a basic region. The C4-type zinc-finger motif lies at Cys-54–Cys-69.

It belongs to the carlaviruses nucleic acid-binding protein family.

Functionally, suppressor of viral-induced RNA silencing. The potential mechanism of action is based on sequestering siRNAs. The protein is RNA silencing suppressor of Solanum tuberosum (Potato).